A 225-amino-acid polypeptide reads, in one-letter code: Lectin (225 aa).

Homotetramer.

Functionally, chitin-binding lectin. Agglutinates rabbit erythrocytes, but not human erythrocytes. This Vachellia farnesiana (Sweet acacia) protein is Lectin.